The chain runs to 779 residues: Aconitate hydratase, mitochondrial (779 aa).

The transit peptide at 1 to 28 (MIAMDRIARIPIARWTSRAFRVSAAARQ) directs the protein to the mitochondrion. Substrate-binding positions include Gln-97 and 190–192 (DSH). Residues Cys-383, Cys-446, and Cys-449 each coordinate [4Fe-4S] cluster. Substrate-binding positions include Arg-472, Arg-477, Arg-605, and 668–669 (SR).

The protein belongs to the aconitase/IPM isomerase family. As to quaternary structure, monomer. Requires [4Fe-4S] cluster as cofactor.

The protein resides in the mitochondrion. The catalysed reaction is citrate = D-threo-isocitrate. The protein operates within carbohydrate metabolism; tricarboxylic acid cycle; isocitrate from oxaloacetate: step 2/2. Its function is as follows. Catalyzes the isomerization of citrate to isocitrate via cis-aconitate. The sequence is that of Aconitate hydratase, mitochondrial from Gracilaria gracilis (Red alga).